A 36-amino-acid chain; its full sequence is Beta-amanitin proprotein (36 aa).

Positions Met1 to Pro10 are excised as a propeptide. The cyclopeptide (Ile-Pro) cross-link spans Ile11 to Pro18. Residues Trp12–Cys16 constitute a cross-link (2'-cysteinyl-6'-hydroxytryptophan sulfoxide (Trp-Cys)). The propeptide occupies Cys19 to Cys36.

The protein belongs to the MSDIN fungal toxin family. In terms of processing, processed by the macrocyclase-peptidase enzyme POPB to yield a toxic cyclic decapeptide. POPB first removes 10 residues from the N-terminus. Conformational trapping of the remaining peptide forces the enzyme to release this intermediate rather than proceed to macrocyclization. The enzyme rebinds the remaining peptide in a different conformation and catalyzes macrocyclization of the N-terminal 8 residues.

In terms of biological role, toxin belonging to the bicyclic octapeptides amatoxins that acts by binding non-competitively to RNA polymerase II and greatly slowing the elongation of transcripts from target promoters. The protein is Beta-amanitin proprotein of Amanita phalloides (Death cap).